Here is a 237-residue protein sequence, read N- to C-terminus: uncharacterized protein (237 aa).

This sequence belongs to the bactofilin family.

This is an uncharacterized protein from Bacillus subtilis (strain 168).